A 498-amino-acid chain; its full sequence is Glycerol kinase (498 aa).

Thr-12 contacts ADP. ATP is bound by residues Thr-12, Thr-13, and Ser-14. Sn-glycerol 3-phosphate is bound at residue Thr-12. Arg-16 is an ADP binding site. Sn-glycerol 3-phosphate is bound by residues Arg-82, Glu-83, Tyr-134, and Asp-244. 5 residues coordinate glycerol: Arg-82, Glu-83, Tyr-134, Asp-244, and Gln-245. Thr-266 and Gly-310 together coordinate ADP. ATP contacts are provided by Thr-266, Gly-310, Gln-314, and Gly-411. The ADP site is built by Gly-411 and Asn-415.

The protein belongs to the FGGY kinase family.

It catalyses the reaction glycerol + ATP = sn-glycerol 3-phosphate + ADP + H(+). It participates in polyol metabolism; glycerol degradation via glycerol kinase pathway; sn-glycerol 3-phosphate from glycerol: step 1/1. Its activity is regulated as follows. Inhibited by fructose 1,6-bisphosphate (FBP). Its function is as follows. Key enzyme in the regulation of glycerol uptake and metabolism. Catalyzes the phosphorylation of glycerol to yield sn-glycerol 3-phosphate. The chain is Glycerol kinase from Chloroflexus aurantiacus (strain ATCC 29366 / DSM 635 / J-10-fl).